We begin with the raw amino-acid sequence, 310 residues long: Leucine carboxyl methyltransferase 1 (310 aa).

Residues R50, G75, D100, 145–146 (DI), and E169 each bind S-adenosyl-L-methionine.

This sequence belongs to the methyltransferase superfamily. LCMT family.

It carries out the reaction [phosphatase 2A protein]-C-terminal L-leucine + S-adenosyl-L-methionine = [phosphatase 2A protein]-C-terminal L-leucine methyl ester + S-adenosyl-L-homocysteine. Its function is as follows. Methylates the carboxyl group of the C-terminal leucine residue of protein phosphatase 2A catalytic subunits to form alpha-leucine ester residues. This chain is Leucine carboxyl methyltransferase 1 (ppm1), found in Schizosaccharomyces pombe (strain 972 / ATCC 24843) (Fission yeast).